A 294-amino-acid polypeptide reads, in one-letter code: MPRGPGSLLLLVLASHCCLGSARGLFFGQPDFSYKRSNCKPIPANLQLCHGIEYQNMRLPNLLGHETMKEVLEQAGAWIPLVMKQCHPDTKKFLCSLFAPVCLDDLDETIQPCHSLCVQVKDRCAPVMSAFGFPWPDMLECDRFPQDNDLCIPLASSDHLLPATEEAPKVCEACKNKNEDDNDIMETLCKNDFALKIKVKEITYINRDTKIILETKSKTIYKLNGVSERDLKKSVLWLKDSLQCTCEEMNDINAPYLVMGQKLGGELVITSVKRWQKGQREFKRISRSIRKLQC.

The first 24 residues, 1–24, serve as a signal peptide directing secretion; the sequence is MPRGPGSLLLLVLASHCCLGSARG. The region spanning 34–154 is the FZ domain; that stretch reads YKRSNCKPIP…PQDNDLCIPL (121 aa). Cystine bridges form between Cys-39/Cys-102, Cys-49/Cys-95, Cys-86/Cys-124, Cys-113/Cys-151, Cys-117/Cys-141, Cys-171/Cys-244, Cys-174/Cys-246, and Cys-189/Cys-294. Positions 171–294 constitute an NTR domain; the sequence is CEACKNKNED…ISRSIRKLQC (124 aa).

The protein belongs to the secreted frizzled-related protein (sFRP) family.

The protein resides in the secreted. In terms of biological role, soluble frizzled-related proteins (sFRPS) function as modulators of Wnt signaling through direct interaction with Wnts. They have a role in regulating cell growth and differentiation in specific cell types. SFRP2 may be important for eye retinal development and for myogenesis. The sequence is that of Secreted frizzled-related protein 2 (SFRP2) from Canis lupus familiaris (Dog).